The chain runs to 191 residues: dCTP deaminase (191 aa).

DCTP-binding positions include 112–117 (KSTYAR), 136–138 (TLE), glutamine 157, tyrosine 173, and glutamine 183. The active-site Proton donor/acceptor is glutamate 138.

It belongs to the dCTP deaminase family. Homotrimer.

The catalysed reaction is dCTP + H2O + H(+) = dUTP + NH4(+). It participates in pyrimidine metabolism; dUMP biosynthesis; dUMP from dCTP (dUTP route): step 1/2. In terms of biological role, catalyzes the deamination of dCTP to dUTP. The polypeptide is dCTP deaminase (Psychrobacter sp. (strain PRwf-1)).